The following is a 270-amino-acid chain: uncharacterized protein (270 aa).

In terms of biological role, possibly involved in pGI2 replication mechanism. This is an uncharacterized protein from Bacillus thuringiensis.